Consider the following 354-residue polypeptide: Inactive ADP-ribosyltransferase ARH2 (354 aa).

S27 is modified (phosphoserine).

It belongs to the ADP-ribosylglycohydrolase family.

The protein localises to the cytoplasm. It is found in the myofibril. The protein resides in the sarcomere. In terms of biological role, required for myofibril assembly and outgrowth of the cardiac chambers in the developing heart. Appears to be catalytically inactive, showing no activity against O-acetyl-ADP-ribose. The polypeptide is Inactive ADP-ribosyltransferase ARH2 (ADPRHL1) (Bos taurus (Bovine)).